Reading from the N-terminus, the 343-residue chain is Putative MO25-like protein At4g17270 (343 aa).

The protein belongs to the Mo25 family.

In Arabidopsis thaliana (Mouse-ear cress), this protein is Putative MO25-like protein At4g17270.